The following is a 336-amino-acid chain: Fructose-1,6-bisphosphatase class 1 (336 aa).

Mg(2+) contacts are provided by Glu-90, Asp-112, Leu-114, and Asp-115. Substrate is bound by residues 115-118 (DGSS), Asn-211, and Lys-277. Glu-283 is a Mg(2+) binding site.

This sequence belongs to the FBPase class 1 family. In terms of assembly, homotetramer. Requires Mg(2+) as cofactor.

The protein localises to the cytoplasm. The catalysed reaction is beta-D-fructose 1,6-bisphosphate + H2O = beta-D-fructose 6-phosphate + phosphate. The protein operates within carbohydrate biosynthesis; gluconeogenesis. In Pseudomonas syringae pv. syringae (strain B728a), this protein is Fructose-1,6-bisphosphatase class 1.